Consider the following 227-residue polypeptide: Phosphoglycolate phosphatase (227 aa).

Asp-11 acts as the Nucleophile in catalysis. Asp-11, Asp-13, and Asp-176 together coordinate Mg(2+).

This sequence belongs to the HAD-like hydrolase superfamily. CbbY/CbbZ/Gph/YieH family. Requires Mg(2+) as cofactor.

The enzyme catalyses 2-phosphoglycolate + H2O = glycolate + phosphate. It functions in the pathway organic acid metabolism; glycolate biosynthesis; glycolate from 2-phosphoglycolate: step 1/1. Functionally, specifically catalyzes the dephosphorylation of 2-phosphoglycolate. Is involved in the dissimilation of the intracellular 2-phosphoglycolate formed during the DNA repair of 3'-phosphoglycolate ends, a major class of DNA lesions induced by oxidative stress. The protein is Phosphoglycolate phosphatase of Aliivibrio fischeri (strain ATCC 700601 / ES114) (Vibrio fischeri).